A 100-amino-acid polypeptide reads, in one-letter code: Aspartyl/glutamyl-tRNA(Asn/Gln) amidotransferase subunit C (100 aa).

The protein belongs to the GatC family. As to quaternary structure, heterotrimer of A, B and C subunits.

The catalysed reaction is L-glutamyl-tRNA(Gln) + L-glutamine + ATP + H2O = L-glutaminyl-tRNA(Gln) + L-glutamate + ADP + phosphate + H(+). It carries out the reaction L-aspartyl-tRNA(Asn) + L-glutamine + ATP + H2O = L-asparaginyl-tRNA(Asn) + L-glutamate + ADP + phosphate + 2 H(+). In terms of biological role, allows the formation of correctly charged Asn-tRNA(Asn) or Gln-tRNA(Gln) through the transamidation of misacylated Asp-tRNA(Asn) or Glu-tRNA(Gln) in organisms which lack either or both of asparaginyl-tRNA or glutaminyl-tRNA synthetases. The reaction takes place in the presence of glutamine and ATP through an activated phospho-Asp-tRNA(Asn) or phospho-Glu-tRNA(Gln). This is Aspartyl/glutamyl-tRNA(Asn/Gln) amidotransferase subunit C from Staphylococcus haemolyticus (strain JCSC1435).